We begin with the raw amino-acid sequence, 98 residues long: MKTLSEIKEILRKHKKELKEKYKVKSIAIFGSYARNEQTETSDIDILIDYYEPISLLKLIELENYLSDLLEIKVDLITKNSIHNPYVKKSIEEDLIYI.

The GSX(10)DXD motif signature appears at 31–45; that stretch reads GSYARNEQTETSDID. Asp-43, Asp-45, and Asp-75 together coordinate Mg(2+).

This sequence belongs to the MntA antitoxin family. Probably forms a complex with cognate toxin MJ0125. Mg(2+) is required as a cofactor.

It catalyses the reaction L-tyrosyl-[protein] + ATP = O-(5'-adenylyl)-L-tyrosyl-[protein] + diphosphate. The enzyme catalyses O-(5'-adenylyl)-L-tyrosyl-[protein] + ATP = O-[5'-(adenylyl-(5'-&gt;3')-adenylyl)]-L-tyrosyl-[protein] + diphosphate. Probable antitoxin component of a putative type VII toxin-antitoxin (TA) system. Neutralizes cognate toxic MJ0125 by di-AMPylation. This chain is Putative protein adenylyltransferase MJ0126, found in Methanocaldococcus jannaschii (strain ATCC 43067 / DSM 2661 / JAL-1 / JCM 10045 / NBRC 100440) (Methanococcus jannaschii).